The sequence spans 332 residues: UDP-N-acetylenolpyruvoylglucosamine reductase (332 aa).

Residues 15 to 184 (IDVSAACFLE…TYVSFRLSKR (170 aa)) enclose the FAD-binding PCMH-type domain. Arg-160 is an active-site residue. Ser-232 serves as the catalytic Proton donor. Glu-328 is a catalytic residue.

Belongs to the MurB family. It depends on FAD as a cofactor.

The protein resides in the cytoplasm. The enzyme catalyses UDP-N-acetyl-alpha-D-muramate + NADP(+) = UDP-N-acetyl-3-O-(1-carboxyvinyl)-alpha-D-glucosamine + NADPH + H(+). It functions in the pathway cell wall biogenesis; peptidoglycan biosynthesis. In terms of biological role, cell wall formation. In Bacteroides fragilis (strain YCH46), this protein is UDP-N-acetylenolpyruvoylglucosamine reductase.